The sequence spans 161 residues: Ribonuclease H (161 aa).

In terms of domain architecture, RNase H type-1 spans 11-152 (GPRPVVIHTD…ADQLARDGLT (142 aa)). Mg(2+) is bound by residues Asp-20, Glu-58, Asp-80, and Asp-144. Positions 137–161 (HDENERADQLARDGLTENRMKSRIG) are disordered.

This sequence belongs to the RNase H family. As to quaternary structure, monomer. It depends on Mg(2+) as a cofactor.

It localises to the cytoplasm. It carries out the reaction Endonucleolytic cleavage to 5'-phosphomonoester.. Its function is as follows. Endonuclease that specifically degrades the RNA of RNA-DNA hybrids. The sequence is that of Ribonuclease H from Rhodopseudomonas palustris (strain HaA2).